The following is a 49-amino-acid chain: Large ribosomal subunit protein bL33C (49 aa).

Belongs to the bacterial ribosomal protein bL33 family.

The sequence is that of Large ribosomal subunit protein bL33C from Bacillus pumilus (strain SAFR-032).